The following is a 121-amino-acid chain: Protein PilH (121 aa).

In terms of domain architecture, Response regulatory spans 3–119; that stretch reads RILIVDDSPT…TLLKTINAVL (117 aa). D52 carries the post-translational modification 4-aspartylphosphate.

In terms of biological role, may be a part of a signal-transduction system that regulates twitching motility by controlling pilus function (extension and retraction). This chain is Protein PilH (pilH), found in Pseudomonas aeruginosa (strain ATCC 15692 / DSM 22644 / CIP 104116 / JCM 14847 / LMG 12228 / 1C / PRS 101 / PAO1).